Consider the following 253-residue polypeptide: uncharacterized protein (253 aa).

Residues 175–184 (NPTQTSPGKP) show a composition bias toward polar residues. The disordered stretch occupies residues 175–253 (NPTQTSPGKP…ATENEDRLPS (79 aa)). Ser180 carries the post-translational modification Phosphoserine. Composition is skewed to low complexity over residues 185–196 (STSESSQTDTST) and 203–214 (TPTTTRASSYTT). Residues 215 to 242 (LVSTSNQVSNEAEASAVETSANQAQNTE) are compositionally biased toward polar residues.

This sequence belongs to the TRAPP small subunits family. BET3 subfamily.

This is an uncharacterized protein from Schizosaccharomyces pombe (strain 972 / ATCC 24843) (Fission yeast).